The sequence spans 463 residues: Zinc finger protein interacting with ribonucleoprotein K (463 aa).

Residues 14 to 89 (VTFQDVAICF…PKTNLCEKCV (76 aa)) enclose the KRAB domain. Disordered regions lie at residues 106–128 (HSTEASSKVDQHQDHNSTGKPLE) and 171–211 (KYRK…TSNG). Over residues 174–191 (KSTEGRKETSHESDKSEE) the composition is skewed to basic and acidic residues. Residues 192–201 (CQSLSSQKQT) show a composition bias toward polar residues. 9 C2H2-type zinc fingers span residues 215–237 (YECSKCGKTFRGKYSLDQHQRVH), 243–265 (WECRDCGKFFSQTSHLNDHRRIH), 271–293 (YECSECGKLFRQNSSLVDHQKTH), 299–321 (YECSQCGKSFSQKATLVKHKRVH), 327–349 (YKCSECGNSFSQSAILNQHRRIH), 355–377 (YECRECGKSFSQKATLIKHQRVH), 383–405 (YKCSECGKSFSQSSILIQHRRIH), 411–433 (YECSQCGKSFSQKSGLIQHQVVH), and 439–461 (YECDTCGNSFSQCSSLIHHQKCH).

Belongs to the krueppel C2H2-type zinc-finger protein family. Interacts with HNRPK. Expressed in ovary and liver, and at lower levels in brain and muscle.

It is found in the nucleus. Functionally, may be a transcriptional repressor. This Mus musculus (Mouse) protein is Zinc finger protein interacting with ribonucleoprotein K (Zik1).